Reading from the N-terminus, the 963-residue chain is Reversion-inducing cysteine-rich protein with Kazal motifs (963 aa).

Positions 1–28 (MAAAVAAWPWALFCLAAVPPLLSPGAAG) are cleaved as a signal peptide. One copy of the Knot 1 repeat lies at 31–78 (CCYHAKDNLMCRDVCEQILSSKSDSRLKHLLQRAPEYCPESMGEVWGC). The segment at 31–332 (CCYHAKDNLM…NAVEVSMLTC (302 aa)) is 5 X Knot repeats. Residue Asn80 is glycosylated (N-linked (GlcNAc...) asparagine). Knot repeat units lie at residues 98 to 135 (CCELAIAVECRQACKQASSKNDILKVCRKEYENALFSC) and 145 to 191 (CCSY…LIHC). Asn194 carries N-linked (GlcNAc...) asparagine glycosylation. Knot repeat units lie at residues 210–257 (CCDR…LWQC) and 286–332 (CCSK…MLTC). N-linked (GlcNAc...) asparagine glycans are attached at residues Asn291 and Asn346. Kazal-like domains lie at 621-667 (KFTG…SCIS), 692-746 (SFGK…PCQP), and 749-783 (KSVEPVCGHNGETYSSVCAAYSDRVAVDYYGHCQA). Cystine bridges form between Cys627–Cys652, Cys629–Cys648, Cys637–Cys665, Cys710–Cys729, Cys718–Cys744, and Cys755–Cys781. Ser936 carries the GPI-anchor amidated serine lipid modification. A propeptide spanning residues 937 to 963 (PSVKVGPVLHCLFISFSFTLLKLMDYI) is cleaved from the precursor.

Belongs to the RECK family. Interacts (via knot repeats) with WNT7A (via disordered linker region); the interaction is direct. Interacts (via knot repeats) with WNT7B (via disordered linker region); the interaction is direct. Interacts with ADGRA2; the interaction is direct. Post-translationally, localizes to the plasma membrane via its GPI-anchor. Released from the plasma membrane following cleavage of the GPI-anchor by GDPD5/GPE2.

It localises to the cell membrane. Functionally, functions together with ADGRA2 to enable brain endothelial cells to selectively respond to Wnt7 signals (WNT7A or WNT7B). Plays a key role in Wnt7-specific responses: required for central nervous system (CNS) angiogenesis and blood-brain barrier regulation. Acts as a Wnt7-specific coactivator of canonical Wnt signaling by decoding Wnt ligands: acts by interacting specifically with the disordered linker region of Wnt7, thereby conferring ligand selectivity for Wnt7. ADGRA2 is then required to deliver RECK-bound Wnt7 to frizzled by assembling a higher-order RECK-ADGRA2-Fzd-LRP5-LRP6 complex. Also acts as a serine protease inhibitor. The chain is Reversion-inducing cysteine-rich protein with Kazal motifs from Gallus gallus (Chicken).